The chain runs to 612 residues: Bifunctional 6(G)-fructosyltransferase/2,1-fructan:2,1-fructan 1-fructosyltransferase (612 aa).

The Cytoplasmic portion of the chain corresponds to 1–24 (MDAQDIESRHPLIGARPRRRALRS). Residues 25–45 (LSILLAAALLLGLVLFYANGT) form a helical; Signal-anchor for type II membrane protein membrane-spanning segment. Topologically, residues 46–612 (GSGTAVDPVR…NSTYNDFYHF (567 aa)) are vacuolar. Residues 82–85 (YMND), Gln101, and Trp109 contribute to the substrate site. Asp85 is an active-site residue. Asn111 carries N-linked (GlcNAc...) asparagine glycosylation. Substrate-binding positions include 144-145 (WT) and 208-209 (RD). N-linked (GlcNAc...) asparagine glycans are attached at residues Asn216 and Asn230. Glu267 is a substrate binding site. Residue Asn465 is glycosylated (N-linked (GlcNAc...) asparagine). Cys466 and Cys514 are joined by a disulfide. N-linked (GlcNAc...) asparagine glycans are attached at residues Asn586 and Asn603.

This sequence belongs to the glycosyl hydrolase 32 family. Might be processed in two N-terminal and C-terminal proteolytic fragments.

The protein resides in the vacuole membrane. The enzyme catalyses [1-beta-D-fructofuranosyl-(2-&gt;1)-]m+1 alpha-D-glucopyranoside + [1-beta-D-fructofuranosyl-(2-&gt;1)-]n+1 alpha-D-glucopyranoside = [1-beta-D-fructofuranosyl-(2-&gt;1)-]m alpha-D-glucopyranoside + [1-beta-D-fructofuranosyl-(2-&gt;1)-]n+1 beta-D-fructofuranosyl-(2-&gt;6)-alpha-D-glucopyranoside (m &gt; 0, n &gt;= 0).. The catalysed reaction is [beta-D-fructosyl-(2-&gt;1)-]m + [beta-D-fructosyl-(2-&gt;1)-]n = [beta-D-fructosyl-(2-&gt;1)-]m-1 + [beta-D-fructosyl-(2-&gt;1)-]n+1.. Involved in the synthesis of fructan of the inulin neoseries. Catalyzes a self-transfer between identical oligosaccharides of the 1-kestose series. The sequence is that of Bifunctional 6(G)-fructosyltransferase/2,1-fructan:2,1-fructan 1-fructosyltransferase from Allium cepa (Onion).